The sequence spans 425 residues: Histidinol dehydrogenase (425 aa).

Positions 124, 184, and 207 each coordinate NAD(+). Residues S230, Q252, and H255 each contribute to the substrate site. Positions 252 and 255 each coordinate Zn(2+). Active-site proton acceptor residues include E321 and H322. H322, D355, E409, and H414 together coordinate substrate. Position 355 (D355) interacts with Zn(2+). Position 414 (H414) interacts with Zn(2+).

The protein belongs to the histidinol dehydrogenase family. It depends on Zn(2+) as a cofactor.

It carries out the reaction L-histidinol + 2 NAD(+) + H2O = L-histidine + 2 NADH + 3 H(+). The protein operates within amino-acid biosynthesis; L-histidine biosynthesis; L-histidine from 5-phospho-alpha-D-ribose 1-diphosphate: step 9/9. In terms of biological role, catalyzes the sequential NAD-dependent oxidations of L-histidinol to L-histidinaldehyde and then to L-histidine. The protein is Histidinol dehydrogenase of Halobacterium salinarum (strain ATCC 700922 / JCM 11081 / NRC-1) (Halobacterium halobium).